The sequence spans 292 residues: NAD kinase (292 aa).

The active-site Proton acceptor is the D73. Residues 73–74 (DG), 147–148 (NE), H158, R175, D177, 188–193 (TAYSLS), and Q247 contribute to the NAD(+) site.

Belongs to the NAD kinase family. A divalent metal cation serves as cofactor.

It localises to the cytoplasm. The enzyme catalyses NAD(+) + ATP = ADP + NADP(+) + H(+). In terms of biological role, involved in the regulation of the intracellular balance of NAD and NADP, and is a key enzyme in the biosynthesis of NADP. Catalyzes specifically the phosphorylation on 2'-hydroxyl of the adenosine moiety of NAD to yield NADP. This chain is NAD kinase, found in Escherichia coli O7:K1 (strain IAI39 / ExPEC).